The sequence spans 231 residues: Ferredoxin-type protein NapG (231 aa).

Residues 1 to 41 constitute a signal peptide (tat-type signal); that stretch reads MSRSAKPQNGRRRFLRDVVRTAGGLAAVGVALGLQQQTARA. 4 4Fe-4S ferredoxin-type domains span residues 50–81, 89–121, 130–166, and 177–208; these read GAIN…LATL, TPYF…REIE, LAVL…LELE, and FLPT…VLPL. Residues Cys-61, Cys-64, Cys-67, Cys-71, Cys-99, Cys-102, Cys-107, Cys-111, Cys-139, Cys-147, Cys-150, Cys-154, Cys-186, Cys-189, Cys-192, and Cys-196 each coordinate [4Fe-4S] cluster.

The cofactor is [4Fe-4S] cluster. In terms of processing, exported by the Tat system. The position of the signal peptide cleavage has not been experimentally proven.

It is found in the periplasm. Required for electron transfer from ubiquinol, via NapC, to the periplasmic nitrate reductase NapAB complex. The chain is Ferredoxin-type protein NapG (napG) from Escherichia coli (strain K12).